Reading from the N-terminus, the 545-residue chain is Coiled-coil domain-containing protein 60 (545 aa).

A coiled-coil region spans residues 72–99 (NILREENAMKKKQQLLQKLKEEELNKFQ). The interval 224–284 (PAIRTAMASR…DNESSSTKPE (61 aa)) is disordered. Residues 238 to 259 (RGSTLSLTRTSGGSSPQSSMMS) show a composition bias toward low complexity.

This is Coiled-coil domain-containing protein 60 (Ccdc60) from Mus musculus (Mouse).